A 200-amino-acid chain; its full sequence is MSEALTELASYLGEARGNLIAASQLKYGELTLTATGENLIALLTFLRDDAKCGFVNMIDICGVDWPQRELRFDVVYHLLSPKKNLRIRVKVATDEDTPVPSACAVYPGADWFERETWDMYGVLFTGHPDLRRILTDYGFEGHPLRKDFPTTGFVEVRYDDAAKRVVYEPVELKQEFRNFDFMSPWEGTEYVLPGDEKAKQ.

It belongs to the complex I 30 kDa subunit family. As to quaternary structure, NDH-1 is composed of 14 different subunits. Subunits NuoB, C, D, E, F, and G constitute the peripheral sector of the complex.

It localises to the cell inner membrane. It carries out the reaction a quinone + NADH + 5 H(+)(in) = a quinol + NAD(+) + 4 H(+)(out). Functionally, NDH-1 shuttles electrons from NADH, via FMN and iron-sulfur (Fe-S) centers, to quinones in the respiratory chain. The immediate electron acceptor for the enzyme in this species is believed to be ubiquinone. Couples the redox reaction to proton translocation (for every two electrons transferred, four hydrogen ions are translocated across the cytoplasmic membrane), and thus conserves the redox energy in a proton gradient. This chain is NADH-quinone oxidoreductase subunit C, found in Rhizobium etli (strain ATCC 51251 / DSM 11541 / JCM 21823 / NBRC 15573 / CFN 42).